Consider the following 207-residue polypeptide: MKNVNDLIEKAIELRNRGLRSGEIADELNISRETATWLLTRARKETGAQAPKDIFIDWSTIGKSSSRLMLIATCMADMVEEVLNEMDTNVDVVVGIALSGVPLANVVAYQYGVDLAVIHPGKHRSDDTGKHHQMQPTVSENYANVKGKRCVIIDDVITTGSTMEETIKLIEDQGGEAVAIAVIIDKRGADTISNVPVKHLIRIGRVD.

The protein belongs to the purine/pyrimidine phosphoribosyltransferase family. GfcR subfamily.

The chain is Transcriptional regulator GfcR from Methanocella arvoryzae (strain DSM 22066 / NBRC 105507 / MRE50).